Here is a 425-residue protein sequence, read N- to C-terminus: Tyrosine--tRNA ligase (425 aa).

Tyrosine 33 lines the L-tyrosine pocket. The 'HIGH' region signature appears at 38–47; sequence PTADSLHLGN. Residues tyrosine 170 and glutamine 174 each contribute to the L-tyrosine site. Residues 230–234 carry the 'KMSKS' region motif; sequence KFGKS. Lysine 233 provides a ligand contact to ATP. An S4 RNA-binding domain is found at 356–422; the sequence is KKLIDLLVET…GKKNKMIIRL (67 aa).

This sequence belongs to the class-I aminoacyl-tRNA synthetase family. TyrS type 1 subfamily. As to quaternary structure, homodimer.

It is found in the cytoplasm. It catalyses the reaction tRNA(Tyr) + L-tyrosine + ATP = L-tyrosyl-tRNA(Tyr) + AMP + diphosphate + H(+). In terms of biological role, catalyzes the attachment of tyrosine to tRNA(Tyr) in a two-step reaction: tyrosine is first activated by ATP to form Tyr-AMP and then transferred to the acceptor end of tRNA(Tyr). This Protochlamydia amoebophila (strain UWE25) protein is Tyrosine--tRNA ligase.